The sequence spans 332 residues: Fructose-bisphosphate aldolase (332 aa).

Residue serine 56 participates in D-glyceraldehyde 3-phosphate binding. Aspartate 93 acts as the Proton donor in catalysis. 4 residues coordinate Zn(2+): histidine 94, aspartate 115, glutamate 147, and histidine 191. Position 192 (glycine 192) interacts with dihydroxyacetone phosphate. Zn(2+) is bound at residue histidine 234. Dihydroxyacetone phosphate is bound by residues 235 to 237 (GAS) and 277 to 280 (NIDS).

This sequence belongs to the class II fructose-bisphosphate aldolase family. As to quaternary structure, homodimer. The cofactor is Zn(2+).

It carries out the reaction beta-D-fructose 1,6-bisphosphate = D-glyceraldehyde 3-phosphate + dihydroxyacetone phosphate. The protein operates within carbohydrate degradation; glycolysis; D-glyceraldehyde 3-phosphate and glycerone phosphate from D-glucose: step 4/4. Its function is as follows. Catalyzes the aldol condensation of dihydroxyacetone phosphate (DHAP or glycerone-phosphate) with glyceraldehyde 3-phosphate (G3P) to form fructose 1,6-bisphosphate (FBP) in gluconeogenesis and the reverse reaction in glycolysis. The polypeptide is Fructose-bisphosphate aldolase (fba) (Treponema pallidum (strain Nichols)).